The following is a 412-amino-acid chain: Imidazolonepropionase (412 aa).

Positions 73 and 75 each coordinate Fe(3+). Zn(2+) is bound by residues histidine 73 and histidine 75. 4-imidazolone-5-propanoate-binding residues include arginine 82, tyrosine 145, and histidine 178. Tyrosine 145 serves as a coordination point for N-formimidoyl-L-glutamate. Histidine 247 lines the Fe(3+) pocket. Histidine 247 lines the Zn(2+) pocket. Position 250 (glutamine 250) interacts with 4-imidazolone-5-propanoate. Aspartate 322 contacts Fe(3+). Aspartate 322 contacts Zn(2+). Residues asparagine 324 and glycine 326 each contribute to the N-formimidoyl-L-glutamate site. A 4-imidazolone-5-propanoate-binding site is contributed by serine 327.

It belongs to the metallo-dependent hydrolases superfamily. HutI family. Zn(2+) is required as a cofactor. Fe(3+) serves as cofactor.

It localises to the cytoplasm. It carries out the reaction 4-imidazolone-5-propanoate + H2O = N-formimidoyl-L-glutamate. It functions in the pathway amino-acid degradation; L-histidine degradation into L-glutamate; N-formimidoyl-L-glutamate from L-histidine: step 3/3. Functionally, catalyzes the hydrolytic cleavage of the carbon-nitrogen bond in imidazolone-5-propanoate to yield N-formimidoyl-L-glutamate. It is the third step in the universal histidine degradation pathway. The sequence is that of Imidazolonepropionase from Shewanella amazonensis (strain ATCC BAA-1098 / SB2B).